A 207-amino-acid polypeptide reads, in one-letter code: Nuclear transcription factor Y subunit beta (207 aa).

Residues 1–52 (MTMDGDSSTTDASQLGISADYIGGSHYVIQPHDDTEDSMNDHEDTNGSKESF) form an a domain region. The interval 27–52 (YVIQPHDDTEDSMNDHEDTNGSKESF) is disordered. The segment covering 39–52 (MNDHEDTNGSKESF) has biased composition (basic and acidic residues). Residues 53–142 (REQDIYLPIA…PLKLYLQKFR (90 aa)) are b domain. A DNA-binding region spans residues 59–65 (LPIANVA). Positions 86–97 (VQECVSEFISFI) are subunit association domain (SAD). Residue K140 forms a Glycyl lysine isopeptide (Lys-Gly) (interchain with G-Cter in ubiquitin) linkage. The interval 143–207 (EAMKGEKGIG…ISGVQQIQFS (65 aa)) is c domain.

The protein belongs to the NFYB/HAP3 subunit family. As to quaternary structure, heterotrimeric transcription factor composed of three components, NF-YA, NF-YB and NF-YC. NF-YB and NF-YC must interact and dimerize for NF-YA association and DNA binding. Interacts with C1QBP. Post-translationally, monoubiquitination at Lys-140 plays an important role in transcriptional activation by allowing the deposition of histone H3 methylations as well as histone H2B monoubiquitination at 'Lys-121'.

It localises to the nucleus. Component of the sequence-specific heterotrimeric transcription factor (NF-Y) which specifically recognizes a 5'-CCAAT-3' box motif found in the promoters of its target genes. NF-Y can function as both an activator and a repressor, depending on its interacting cofactors. This Homo sapiens (Human) protein is Nuclear transcription factor Y subunit beta (NFYB).